The sequence spans 213 residues: Orotate phosphoribosyltransferase (213 aa).

K26 serves as a coordination point for 5-phospho-alpha-D-ribose 1-diphosphate. 34-35 contributes to the orotate binding site; the sequence is FF. Residues 72–73, R99, K100, K103, H105, and 124–132 each bind 5-phospho-alpha-D-ribose 1-diphosphate; these read YK and DDVITAGTA. Positions 128 and 156 each coordinate orotate.

This sequence belongs to the purine/pyrimidine phosphoribosyltransferase family. PyrE subfamily. In terms of assembly, homodimer. Requires Mg(2+) as cofactor.

It catalyses the reaction orotidine 5'-phosphate + diphosphate = orotate + 5-phospho-alpha-D-ribose 1-diphosphate. It participates in pyrimidine metabolism; UMP biosynthesis via de novo pathway; UMP from orotate: step 1/2. Its function is as follows. Catalyzes the transfer of a ribosyl phosphate group from 5-phosphoribose 1-diphosphate to orotate, leading to the formation of orotidine monophosphate (OMP). The sequence is that of Orotate phosphoribosyltransferase from Vibrio vulnificus (strain YJ016).